Consider the following 62-residue polypeptide: Sucrase-isomaltase, intestinal (62 aa).

Over 2–12 the chain is Cytoplasmic; that stretch reads ARKKFSGLEIX. A Phosphoserine; by PKA modification is found at Ser7. A helical; Signal-anchor for type II membrane protein transmembrane segment spans residues 13-32; sequence LIVLFAIVLSIAIALVVVXA. Residues 33 to 38 lie on the Lumenal side of the membrane; it reads SKXPAV. The residue at position 59 (Tyr59) is a Sulfotyrosine.

This sequence belongs to the glycosyl hydrolase 31 family. In terms of assembly, the resulting sucrase and isomaltase subunits stay associated with one another in a complex by non-covalent linkages. Post-translationally, the precursor is proteolytically cleaved when exposed to pancreatic proteases in the intestinal lumen. In terms of processing, sulfated.

The protein localises to the apical cell membrane. The catalysed reaction is Hydrolysis of sucrose and maltose by an alpha-D-glucosidase-type action.. The enzyme catalyses Hydrolysis of (1-&gt;6)-alpha-D-glucosidic linkages in some oligosaccharides produced from starch and glycogen by alpha-amylase, and in isomaltose.. In terms of biological role, plays an important role in the final stage of carbohydrate digestion. Isomaltase activity is specific for both alpha-1,4- and alpha-1,6-oligosaccharides. This Sus scrofa (Pig) protein is Sucrase-isomaltase, intestinal (SI).